The primary structure comprises 338 residues: MDIRQDYPLSKRNTFGIAARTDWWIDYTCDADIDRLVKDEFFQECRVQTIGEGSNLLFLANFHGILLHSEVKGITELHKDQDSILLRVGSGMVWDDFVAYAVENNYYGIENLSLIPGQVGASAVQNIGAYGVEVSQLIEAVHARHYRTGESRVFRNEDCRYAYRYSIFKEPDYAEWAIMYVDYRLRLRPSFSLEYKALAKVLEEERITPTLQSIRDTVIRIRNSKLPDPATIGNAGSFFVNPVVSAEKFNTLQTEYPSIPSYPQPDGSVKVPAGWLIEQCGYKGHRSGAVGVYEHQALVLVNYGGATGTQVGALAEEIIGNVRQKFGITLHPEVKYIL.

The FAD-binding PCMH-type domain maps to isoleucine 17–arginine 188. Residue arginine 164 is part of the active site. The Proton donor role is filled by serine 237. The active site involves glutamate 333.

Belongs to the MurB family. It depends on FAD as a cofactor.

It is found in the cytoplasm. It catalyses the reaction UDP-N-acetyl-alpha-D-muramate + NADP(+) = UDP-N-acetyl-3-O-(1-carboxyvinyl)-alpha-D-glucosamine + NADPH + H(+). Its pathway is cell wall biogenesis; peptidoglycan biosynthesis. Functionally, cell wall formation. This is UDP-N-acetylenolpyruvoylglucosamine reductase from Porphyromonas gingivalis (strain ATCC 33277 / DSM 20709 / CIP 103683 / JCM 12257 / NCTC 11834 / 2561).